The following is an 83-amino-acid chain: uncharacterized protein (83 aa).

Positions Glu58 to Gly83 are disordered.

This is an uncharacterized protein from Mycobacterium tuberculosis (strain CDC 1551 / Oshkosh).